Here is a 207-residue protein sequence, read N- to C-terminus: Large ribosomal subunit protein uL3 (207 aa).

The disordered stretch occupies residues Ala-129–Pro-152.

It belongs to the universal ribosomal protein uL3 family. In terms of assembly, part of the 50S ribosomal subunit. Forms a cluster with proteins L14 and L19.

Functionally, one of the primary rRNA binding proteins, it binds directly near the 3'-end of the 23S rRNA, where it nucleates assembly of the 50S subunit. The protein is Large ribosomal subunit protein uL3 of Leptospira biflexa serovar Patoc (strain Patoc 1 / ATCC 23582 / Paris).